Here is a 274-residue protein sequence, read N- to C-terminus: MAIVKCKPTSPGRRHVVKVVNPELHKGKPFAPLLEKNSKTGGRNNNGRITTRHIGGGHKQQYRLIDFKRNKDGIPAVVERLEYDPNRSANIALVLYKDGERRYILAAKGLKAGDQIQSGVDAAIKAGNTLPMRNIPVGSTVHNVEMKPGKGGQLARSAGAYVQIVARDGAYVTLRLRSGEMRKIPADCRATLGEVGNAEHMLRVLGKAGAARWRGVRPTVRGTAMNPVDHPHGGGEGRNFGKHPVTPWGVQTKGKKTRSNKRTDKFIVRRRSKK.

2 disordered regions span residues Lys28 to Ile54 and Arg221 to Lys274. Polar residues predominate over residues Lys39–Ile49.

The protein belongs to the universal ribosomal protein uL2 family. Part of the 50S ribosomal subunit. Forms a bridge to the 30S subunit in the 70S ribosome.

Its function is as follows. One of the primary rRNA binding proteins. Required for association of the 30S and 50S subunits to form the 70S ribosome, for tRNA binding and peptide bond formation. It has been suggested to have peptidyltransferase activity; this is somewhat controversial. Makes several contacts with the 16S rRNA in the 70S ribosome. The chain is Large ribosomal subunit protein uL2 from Edwardsiella ictaluri (strain 93-146).